The following is a 183-amino-acid chain: MKLSAVAGRYARAFLNIAIENEKEDEYLRFLDFVCNVYESNKDLFDNPVVKPEKKVTLIKSVLEEFGEEMDEFQERFLMLLFERKRQKLLRNIHELFEYEKILSEQKVPADLRIAHVPKEEELTLLRKFIRKYALKDPVFKTTVDESLIAGAVVEFEGFRLDTTVQGRLKRLSQETLKRGEMS.

The protein belongs to the ATPase delta chain family. In terms of assembly, F-type ATPases have 2 components, F(1) - the catalytic core - and F(0) - the membrane proton channel. F(1) has five subunits: alpha(3), beta(3), gamma(1), delta(1), epsilon(1). F(0) has three main subunits: a(1), b(2) and c(10-14). The alpha and beta chains form an alternating ring which encloses part of the gamma chain. F(1) is attached to F(0) by a central stalk formed by the gamma and epsilon chains, while a peripheral stalk is formed by the delta and b chains.

Its subcellular location is the cell inner membrane. F(1)F(0) ATP synthase produces ATP from ADP in the presence of a proton or sodium gradient. F-type ATPases consist of two structural domains, F(1) containing the extramembraneous catalytic core and F(0) containing the membrane proton channel, linked together by a central stalk and a peripheral stalk. During catalysis, ATP synthesis in the catalytic domain of F(1) is coupled via a rotary mechanism of the central stalk subunits to proton translocation. Its function is as follows. This protein is part of the stalk that links CF(0) to CF(1). It either transmits conformational changes from CF(0) to CF(1) or is implicated in proton conduction. The polypeptide is ATP synthase subunit delta (Thermotoga neapolitana (strain ATCC 49049 / DSM 4359 / NBRC 107923 / NS-E)).